A 957-amino-acid polypeptide reads, in one-letter code: Glycine dehydrogenase (decarboxylating) (957 aa).

Lys-708 bears the N6-(pyridoxal phosphate)lysine mark.

Belongs to the GcvP family. In terms of assembly, the glycine cleavage system is composed of four proteins: P, T, L and H. It depends on pyridoxal 5'-phosphate as a cofactor.

The catalysed reaction is N(6)-[(R)-lipoyl]-L-lysyl-[glycine-cleavage complex H protein] + glycine + H(+) = N(6)-[(R)-S(8)-aminomethyldihydrolipoyl]-L-lysyl-[glycine-cleavage complex H protein] + CO2. The glycine cleavage system catalyzes the degradation of glycine. The P protein binds the alpha-amino group of glycine through its pyridoxal phosphate cofactor; CO(2) is released and the remaining methylamine moiety is then transferred to the lipoamide cofactor of the H protein. This is Glycine dehydrogenase (decarboxylating) from Escherichia coli O157:H7.